The chain runs to 260 residues: Snake venom serine protease pallabin (260 aa).

Positions 1-18 are cleaved as a signal peptide; the sequence is MVLIRVLANLLILQLSYA. A propeptide spanning residues 19 to 24 is cleaved from the precursor; the sequence is QKSSKL. The region spanning 25–251 is the Peptidase S1 domain; the sequence is VIGGDECNIN…HLDWIENIIA (227 aa). 6 disulfides stabilise this stretch: cysteine 31-cysteine 163, cysteine 50-cysteine 66, cysteine 98-cysteine 258, cysteine 142-cysteine 212, cysteine 174-cysteine 191, and cysteine 202-cysteine 227. Histidine 65 acts as the Charge relay system in catalysis. An N-linked (GlcNAc...) asparagine glycan is attached at asparagine 103. The active-site Charge relay system is the aspartate 110. The active-site Charge relay system is the serine 206.

It belongs to the peptidase S1 family. Snake venom subfamily. Monomer. In terms of tissue distribution, expressed by the venom gland.

The protein localises to the secreted. Its function is as follows. Snake venom serine protease that may act in the hemostasis system of the prey. This chain is Snake venom serine protease pallabin (JZTHR5), found in Gloydius halys (Chinese water mocassin).